The chain runs to 256 residues: Sugar fermentation stimulation protein homolog (256 aa).

Belongs to the SfsA family.

The chain is Sugar fermentation stimulation protein homolog from Prochlorococcus marinus (strain MIT 9211).